A 139-amino-acid chain; its full sequence is Phosphoribosyl-AMP cyclohydrolase (139 aa).

Asp91 lines the Mg(2+) pocket. Cys92 is a Zn(2+) binding site. 2 residues coordinate Mg(2+): Asp93 and Asp95. Residues Cys110 and Cys117 each coordinate Zn(2+).

Belongs to the PRA-CH family. As to quaternary structure, homodimer. Requires Mg(2+) as cofactor. The cofactor is Zn(2+).

Its subcellular location is the cytoplasm. It carries out the reaction 1-(5-phospho-beta-D-ribosyl)-5'-AMP + H2O = 1-(5-phospho-beta-D-ribosyl)-5-[(5-phospho-beta-D-ribosylamino)methylideneamino]imidazole-4-carboxamide. The protein operates within amino-acid biosynthesis; L-histidine biosynthesis; L-histidine from 5-phospho-alpha-D-ribose 1-diphosphate: step 3/9. In terms of biological role, catalyzes the hydrolysis of the adenine ring of phosphoribosyl-AMP. In Brucella abortus (strain S19), this protein is Phosphoribosyl-AMP cyclohydrolase.